The sequence spans 206 residues: Small ribosomal subunit protein uS4 (206 aa).

Residues 15 to 46 (MGENIWGRPKSPVNKREYGPGQHGQRRKNKLS) are disordered. The S4 RNA-binding domain occupies 94–157 (RRLDAIVYRA…RQLAIVLEAT (64 aa)).

This sequence belongs to the universal ribosomal protein uS4 family. In terms of assembly, part of the 30S ribosomal subunit. Contacts protein S5. The interaction surface between S4 and S5 is involved in control of translational fidelity.

Functionally, one of the primary rRNA binding proteins, it binds directly to 16S rRNA where it nucleates assembly of the body of the 30S subunit. With S5 and S12 plays an important role in translational accuracy. This Cereibacter sphaeroides (strain ATCC 17025 / ATH 2.4.3) (Rhodobacter sphaeroides) protein is Small ribosomal subunit protein uS4.